Reading from the N-terminus, the 435-residue chain is ATP-dependent RNA helicase DBP8 (435 aa).

Residues 4–32 (SEFKSLGCSKWLVEALNAMKIVQPTAIQK) carry the Q motif motif. The Helicase ATP-binding domain occupies 35–211 (IPEILKGRDC…DAPQTEGKPP (177 aa)). Residue 48–55 (ANTGSGKT) participates in ATP binding. Residues 157-160 (DEAD) carry the DEAD box motif. One can recognise a Helicase C-terminal domain in the interval 244-391 (YLYQILTSEK…FTDVGDTAVI (148 aa)). Residues 409-429 (MDKEGFGERRKLQKRKNESKE) show a composition bias toward basic and acidic residues. The interval 409 to 435 (MDKEGFGERRKLQKRKNESKEKTHRRT) is disordered.

This sequence belongs to the DEAD box helicase family. DDX49/DBP8 subfamily.

It localises to the nucleus. The protein localises to the nucleolus. It catalyses the reaction ATP + H2O = ADP + phosphate + H(+). In terms of biological role, ATP-binding RNA helicase involved in 40S ribosomal subunit biogenesis and is required for the normal formation of 18S rRNAs through pre-rRNA processing at A0, A1 and A2 sites. Required for vegetative growth. The protein is ATP-dependent RNA helicase DBP8 (DBP8) of Kluyveromyces lactis (strain ATCC 8585 / CBS 2359 / DSM 70799 / NBRC 1267 / NRRL Y-1140 / WM37) (Yeast).